Reading from the N-terminus, the 607-residue chain is Replication factor C large subunit (607 aa).

55–62 (GPAGIGKT) serves as a coordination point for ATP. Residues 468–607 (EEEKPQKEGS…PKNQKTLFDF (140 aa)) are disordered. Positions 506 to 518 (TSEKKENSEKKEN) are enriched in basic and acidic residues. Residues 548–558 (SESVEQKTSSK) show a composition bias toward polar residues.

This sequence belongs to the activator 1 small subunits family. RfcL subfamily. Heteromultimer composed of small subunits (RfcS) and large subunits (RfcL).

Functionally, part of the RFC clamp loader complex which loads the PCNA sliding clamp onto DNA. The sequence is that of Replication factor C large subunit from Methanosarcina acetivorans (strain ATCC 35395 / DSM 2834 / JCM 12185 / C2A).